The following is a 63-amino-acid chain: Large ribosomal subunit protein bL28 (63 aa).

Belongs to the bacterial ribosomal protein bL28 family.

This Desulfosudis oleivorans (strain DSM 6200 / JCM 39069 / Hxd3) (Desulfococcus oleovorans) protein is Large ribosomal subunit protein bL28.